The sequence spans 386 residues: Probable copper-dependent oxygenase M1 (386 aa).

An N-terminal signal peptide occupies residues 1–22 (MLRMKKICTAFLTIALCTHVLA). A glycan (N-linked (GlcNAc...) asparagine) is linked at asparagine 86. The helical transmembrane segment at 334-354 (FVVPIAAIAFIALTIGAGYVF) threads the bilayer.

Belongs to the clz3 oxygenase family.

It localises to the membrane. It functions in the pathway secondary metabolite biosynthesis. Its function is as follows. Probable copper-dependent oxygenase; part of the gene cluster that mediates the biosynthesis of squalestatin S1 (SQS1, also known as zaragozic acid A), a heavily oxidized fungal polyketide that offers potent cholesterol lowering activity by targeting squalene synthase (SS). SQS1 is composed of a 2,8-dioxobicyclic[3.2.1]octane-3,4,5-tricarboxyclic acid core that is connected to two lipophilic polyketide arms. These initial steps feature the priming of an unusual benzoic acid starter unit onto the highly reducing polyketide synthase pks2, followed by oxaloacetate extension and product release to generate a tricarboxylic acid containing product. The phenylalanine ammonia lyase (PAL) M7 and the acyl-CoA ligase M9 are involved in transforming phenylalanine into benzoyl-CoA. The citrate synthase-like protein R3 is involved in connecting the C-alpha-carbons of the hexaketide chain and oxaloacetate to afford the tricarboxylic acid unit. The potential hydrolytic enzymes, M8 and M10, are in close proximity to pks2 and may participate in product release. On the other side, the tetraketide arm is synthesized by a the squalestatin tetraketide synthase pks1 and enzymatically esterified to the core in the last biosynthetic step, by the acetyltransferase M4. The biosynthesis of the tetraketide must involve 3 rounds of chain extension. After the first and second rounds methyl-transfer occurs, and in all rounds of extension the ketoreductase and dehydratase are active. The enoyl reductase and C-MeT of pks1 are not active in the final round of extension. The acetyltransferase M4 appears to have a broad substrate selectivity for its acyl CoA substrate, allowing the in vitro synthesis of novel squalestatins. The biosynthesis of SQS1 requires several oxidative steps likely performed by oxidoreductases M1, R1 and R2. Finally, in support of the identification of the cluster as being responsible for SQS1 production, the cluster contains a gene encoding a putative squalene synthase (SS) R6, suggesting a likely mechanism for self-resistance. The chain is Probable copper-dependent oxygenase M1 from Phoma sp. (strain ATCC 20986 / MF5453).